Consider the following 1252-residue polypeptide: Myosin-3 (1252 aa).

The Myosin motor domain occupies 36 to 715; that stretch reads VGVSDLTLLS…TLFALENMRD (680 aa). Residue 129–136 coordinates ATP; it reads GESGAGKT. The residue at position 357 (Ser357) is a Phosphoserine. Residues 404–486 form an actin-binding region; sequence SIGILDIYGF…PGIFAAMNDA (83 aa). 2 consecutive IQ domains span residues 719 to 739 and 740 to 767; these read YNMAARIQRAWRRYLQKRIDA and AIRIQNAIRGKSGVSTFRNDELRNAGDK. The TH1 domain maps to 773 to 963; it reads KERRNMSLLG…TILVRHGNPP (191 aa). Disordered stretches follow at residues 988–1086, 1106–1136, and 1203–1252; these read KTMK…KTSV, YSLPENIPQSSQTDSYQAAYDFPGSGNPSEL, and INEP…DDDW. Low complexity predominate over residues 997 to 1016; the sequence is KRTPQALPTSSLAASAAQAA. Composition is skewed to polar residues over residues 1050–1063, 1106–1121, and 1203–1219; these read PVRNTSKTISNSKV, YSLPENIPQSSQTDSY, and INEPETHTNQGPSNTDL. The SH3 domain occupies 1116–1178; the sequence is SQTDSYQAAY…PTSYIVKYNG (63 aa). The span at 1238 to 1252 shows a compositional bias: acidic residues; it reads SEEDISREEDDDDDW.

Belongs to the TRAFAC class myosin-kinesin ATPase superfamily. Myosin family. Phosphorylation of the TEDS site (Ser-357) is required for the polarization of the actin cytoskeleton. Phosphorylation probably activates the myosin-I ATPase activity.

The protein localises to the cytoplasm. It is found in the cytoskeleton. The protein resides in the actin patch. Type-I myosin implicated in the organization of the actin cytoskeleton. Required for proper actin cytoskeleton polarization. At the cell cortex, assembles in patch-like structures together with proteins from the actin-polymerizing machinery and promotes actin assembly. Functions as actin nucleation-promoting factor (NPF) for the Arp2/3 complex. This chain is Myosin-3 (MYO3), found in Candida glabrata (strain ATCC 2001 / BCRC 20586 / JCM 3761 / NBRC 0622 / NRRL Y-65 / CBS 138) (Yeast).